The sequence spans 35 residues: Cecropin-B (35 aa).

Leucine 35 is subject to Leucine amide.

This sequence belongs to the cecropin family.

Its subcellular location is the secreted. Its function is as follows. Cecropins have lytic and antibacterial activity against several Gram-positive and Gram-negative bacteria. This is Cecropin-B from Antheraea pernyi (Chinese oak silk moth).